Reading from the N-terminus, the 133-residue chain is Profilin-3 (133 aa).

It belongs to the profilin family. In terms of assembly, occurs in many kinds of cells as a complex with monomeric actin in a 1:1 ratio.

It is found in the cytoplasm. It localises to the cytoskeleton. Binds to actin and affects the structure of the cytoskeleton. At high concentrations, profilin prevents the polymerization of actin, whereas it enhances it at low concentrations. By binding to PIP2, it inhibits the formation of IP3 and DG. This is Profilin-3 (PRO3) from Nicotiana tabacum (Common tobacco).